Consider the following 149-residue polypeptide: Calmodulin (149 aa).

EF-hand domains follow at residues 8–43 (EQIAEFKEAFSLFDKDGDGTITTKELGTVMRSLGQN), 44–79 (PTEAELQDMINEVDADGNGTIDFPEFLTMMARKMKD), 81–116 (DSEEEILEAFKVFDKDGNGFISAAELRHIMTNLGEK), and 117–149 (LTDEEVDEMIREADIDGDGQINYEEFVKMMMSK). 19 residues coordinate Ca(2+): Asp21, Asp23, Asp25, Thr27, Glu32, Asp57, Asp59, Asn61, Thr63, Glu68, Asp94, Asp96, Asn98, Glu105, Asp130, Asp132, Asp134, Gln136, and Glu141.

It belongs to the calmodulin family.

Functionally, calmodulin mediates the control of a large number of enzymes, ion channels and other proteins by Ca(2+). Among the enzymes to be stimulated by the calmodulin-Ca(2+) complex are a number of protein kinases and phosphatases. This chain is Calmodulin, found in Globisporangium splendens (Leaf rot fungus).